The chain runs to 302 residues: Protein FdhE homolog (302 aa).

Belongs to the FdhE family.

It localises to the cytoplasm. Necessary for formate dehydrogenase activity. In Haemophilus influenzae (strain PittGG), this protein is Protein FdhE homolog.